The chain runs to 460 residues: Argininosuccinate lyase (460 aa).

It belongs to the lyase 1 family. Argininosuccinate lyase subfamily.

It localises to the cytoplasm. It carries out the reaction 2-(N(omega)-L-arginino)succinate = fumarate + L-arginine. It participates in amino-acid biosynthesis; L-arginine biosynthesis; L-arginine from L-ornithine and carbamoyl phosphate: step 3/3. This is Argininosuccinate lyase from Desulforamulus reducens (strain ATCC BAA-1160 / DSM 100696 / MI-1) (Desulfotomaculum reducens).